The chain runs to 337 residues: Ketol-acid reductoisomerase (NADP(+)) (337 aa).

One can recognise a KARI N-terminal Rossmann domain in the interval 3 to 183; sequence VEVFYDDDAD…GGTRAGAIRT (181 aa). NADP(+) contacts are provided by residues 26-29, Ser52, Ser54, and 84-87; these read YGSQ and DTAQ. The active site involves His109. Gly135 is a binding site for NADP(+). In terms of domain architecture, KARI C-terminal knotted spans 184–329; that stretch reads TFTEETETDL…SKLRGMMSWV (146 aa). 4 residues coordinate Mg(2+): Asp192, Glu196, Glu228, and Glu232. Substrate is bound at residue Ser253.

It belongs to the ketol-acid reductoisomerase family. Mg(2+) is required as a cofactor.

The enzyme catalyses (2R)-2,3-dihydroxy-3-methylbutanoate + NADP(+) = (2S)-2-acetolactate + NADPH + H(+). It catalyses the reaction (2R,3R)-2,3-dihydroxy-3-methylpentanoate + NADP(+) = (S)-2-ethyl-2-hydroxy-3-oxobutanoate + NADPH + H(+). Its pathway is amino-acid biosynthesis; L-isoleucine biosynthesis; L-isoleucine from 2-oxobutanoate: step 2/4. It participates in amino-acid biosynthesis; L-valine biosynthesis; L-valine from pyruvate: step 2/4. In terms of biological role, involved in the biosynthesis of branched-chain amino acids (BCAA). Catalyzes an alkyl-migration followed by a ketol-acid reduction of (S)-2-acetolactate (S2AL) to yield (R)-2,3-dihydroxy-isovalerate. In the isomerase reaction, S2AL is rearranged via a Mg-dependent methyl migration to produce 3-hydroxy-3-methyl-2-ketobutyrate (HMKB). In the reductase reaction, this 2-ketoacid undergoes a metal-dependent reduction by NADPH to yield (R)-2,3-dihydroxy-isovalerate. This Salinispora arenicola (strain CNS-205) protein is Ketol-acid reductoisomerase (NADP(+)).